We begin with the raw amino-acid sequence, 110 residues long: Prothymosin alpha (110 aa).

N-acetylmethionine is present on methionine 1. Positions 1-110 are disordered; it reads MSDAAVDTSS…TKKQKTDEDD (110 aa). Serine 2 bears the N-acetylserine; in Prothymosin alpha, N-terminally processed mark. Serine 2 carries the post-translational modification Phosphoserine. At threonine 8 the chain carries Phosphothreonine. 2 positions are modified to phosphoserine: serine 9 and serine 10. Threonine 13 and threonine 14 each carry phosphothreonine. The span at 13 to 31 shows a compositional bias: basic and acidic residues; it reads TTKDLKEKKEVVEEAENGR. The residue at position 15 (lysine 15) is an N6-acetyllysine; alternate. Lysine 15 bears the N6-succinyllysine; alternate mark. Residues 42 to 83 are compositionally biased toward acidic residues; it reads ENGEQEADNEVDEEEEEGGEEEEEEEEGDGEEEDGDEDEEAE. A compositionally biased stretch (basic and acidic residues) spans 100-110; it reads DTKKQKTDEDD. Threonine 101 bears the Phosphothreonine mark. Lysine 102 carries the post-translational modification N6-acetyllysine; alternate. Lysine 102 is covalently cross-linked (Glycyl lysine isopeptide (Lys-Gly) (interchain with G-Cter in SUMO2); alternate). Threonine 106 is modified (phosphothreonine).

This sequence belongs to the pro/parathymosin family. As to quaternary structure, interacts with NUPR1; regulates apoptotic process. In terms of processing, covalently linked to a small RNA of about 20 nucleotides.

The protein resides in the nucleus. Functionally, prothymosin alpha may mediate immune function by conferring resistance to certain opportunistic infections. The sequence is that of Prothymosin alpha (PTMA) from Pongo abelii (Sumatran orangutan).